The chain runs to 243 residues: Protein IN2-1 homolog A (243 aa).

Residues 31–112 enclose the GST N-terminal domain; the sequence is GTTRLYICYF…YIDSHFEGPA (82 aa). Glutathione-binding positions include K70, V84, and 96–97; that span reads ES. One can recognise a GST C-terminal domain in the interval 117-240; it reads DPEKRQFADE…YLLDLAKTHL (124 aa).

Belongs to the GST superfamily. HSP26 family.

This is Protein IN2-1 homolog A from Oryza sativa subsp. japonica (Rice).